The chain runs to 296 residues: LysM and putative peptidoglycan-binding domain-containing protein 4 (296 aa).

At 1–217 (MRHEELLTKT…PMDGADCGIQ (217 aa)) the chain is on the extracellular side. A disordered region spans residues 29-67 (KNGSGDSGDSSEEESHRVVLRPRGKERHKSGVHQPPQAG). Asn30 is a glycosylation site (N-linked (GlcNAc...) asparagine). Positions 46–59 (VVLRPRGKERHKSG) are enriched in basic residues. A LysM domain is found at 74–118 (LQRELAQEDSLNKLALQYGCKVADIKKVNNFIREQDLYALKSVKI). A helical membrane pass occupies residues 218 to 238 (WWNAVFIMLLIGIVLPVFYLV). Topologically, residues 239 to 296 (YFKIQASGETPNSLNTTVIPNGSMAMGTVPGQAPRLAVAVPAVTSADSQFSQTTQAGS) are cytoplasmic.

It localises to the membrane. The sequence is that of LysM and putative peptidoglycan-binding domain-containing protein 4 (LYSMD4) from Homo sapiens (Human).